Reading from the N-terminus, the 619-residue chain is MSPLASNPPVPAATDPSVIRNFCIIAHIDHGKSTLADRMLQATGVVQPRDMKAQYLDRMDIERERGITIKSQAVRMPWSVDGVDYALNMIDTPGHVDFTYEVSRSLAACEGAILLVDAAQGIEAQTLANLYLAMEHELEIIPVLNKIDLPAADPDRYAAELASLIGCEPEDVLRVSGKTGVGVEELLDRVVRAIPGPEGDADAPARAMIFDSVYDTYRGVVTYVRVVDGRLSPREKVRMMSTGTTYELLEIGVSSPEPVPTKGLAAGEVGYLITGVKDVRQSKVGDTVTNHAHPAEQSLGGYEDPKPMVFSGLYPIDGSDYPVLRDALDKLKLNDAALVYEPETSVALGFGFRVGFLGLLHLEIVRERLEREFDLDLISTAPNVVYEVTREDREVVTVTNPSEFPEGKILEVREPMASATIIVPAEFIGAVMELCQAKRGNLKGMDYLSEERVEIRYWIPLAEIVFDFFDQLKSRTKGYASLDWKADGDQVADLVKVDILLQGEQVDAFSSITHRDNAYAYGVMMTGKLKELIPRQQYEVPIQAAIGSRIIARENIRAIRKDVLSKCYGGDISRKRKLLEKQKEGKKRMKMVGRVEVPQEAFIAALSSDGAGADQAAKK.

The region spanning 17–198 is the tr-type G domain; the sequence is SVIRNFCIIA…RVVRAIPGPE (182 aa). Residues 29 to 34 and 145 to 148 each bind GTP; these read DHGKST and NKID.

The protein belongs to the TRAFAC class translation factor GTPase superfamily. Classic translation factor GTPase family. LepA subfamily.

Its subcellular location is the cell membrane. It catalyses the reaction GTP + H2O = GDP + phosphate + H(+). Functionally, required for accurate and efficient protein synthesis under certain stress conditions. May act as a fidelity factor of the translation reaction, by catalyzing a one-codon backward translocation of tRNAs on improperly translocated ribosomes. Back-translocation proceeds from a post-translocation (POST) complex to a pre-translocation (PRE) complex, thus giving elongation factor G a second chance to translocate the tRNAs correctly. Binds to ribosomes in a GTP-dependent manner. This chain is Elongation factor 4, found in Micrococcus luteus (strain ATCC 4698 / DSM 20030 / JCM 1464 / CCM 169 / CCUG 5858 / IAM 1056 / NBRC 3333 / NCIMB 9278 / NCTC 2665 / VKM Ac-2230) (Micrococcus lysodeikticus).